The following is a 345-amino-acid chain: AA9 family lytic polysaccharide monooxygenase D (345 aa).

An N-terminal signal peptide occupies residues 1–21; that stretch reads MPSFTSKTLLAALAGAAAVNA. Residues histidine 22 and histidine 107 each coordinate Cu(2+). Cysteine 77 and cysteine 200 are disulfide-bonded. N-linked (GlcNAc...) asparagine glycosylation occurs at asparagine 160. O2 contacts are provided by histidine 186 and glutamine 195. Residue tyrosine 197 participates in Cu(2+) binding. The segment at 315–345 is disordered; sequence VQTSTRPISTRPQPTRCPGLGRRHLRKVARA. Positions 318–327 are enriched in polar residues; it reads STRPISTRPQ. Residues 335–345 are compositionally biased toward basic residues; that stretch reads GRRHLRKVARA.

Belongs to the polysaccharide monooxygenase AA9 family. It depends on Cu(2+) as a cofactor.

The protein resides in the secreted. It carries out the reaction [(1-&gt;4)-beta-D-glucosyl]n+m + reduced acceptor + O2 = 4-dehydro-beta-D-glucosyl-[(1-&gt;4)-beta-D-glucosyl]n-1 + [(1-&gt;4)-beta-D-glucosyl]m + acceptor + H2O.. In terms of biological role, lytic polysaccharide monooxygenase (LPMO) that depolymerizes crystalline and amorphous polysaccharides via the oxidation of scissile alpha- or beta-(1-4)-glycosidic bonds, yielding C1 or C4 oxidation products. Catalysis by LPMOs requires the reduction of the active-site copper from Cu(II) to Cu(I) by a reducing agent and H(2)O(2) or O(2) as a cosubstrate. This is AA9 family lytic polysaccharide monooxygenase D from Podospora anserina (strain S / ATCC MYA-4624 / DSM 980 / FGSC 10383) (Pleurage anserina).